The sequence spans 329 residues: Apolipoprotein E (329 aa).

Positions 1–18 (MKVLWAALVVALLAGCWA) are cleaved as a signal peptide. 8 consecutive repeat copies span residues 92-113 (TLME…EQLG), 114-135 (PMAS…ARLR), 136-157 (SDME…AMLG), 158-179 (QSTE…KRVL), 180-201 (RDAE…EGAE), 202-223 (RSVS…TRHA), 224-245 (KVDA…QQLR), and 246-267 (GRLE…EQME). The 8 X 22 AA approximate tandem repeats stretch occupies residues 92-267 (TLMEETMKEI…HLDEVREQME (176 aa)). Position 155 is a methionine sulfoxide (Met-155). Residue Ser-159 is modified to Phosphoserine. The segment at 170–180 (HMRKLRKRVLR) is LDL and other lipoprotein receptors binding. Residue 174-177 (LRKR) coordinates heparin. The interval 222 to 302 (HAKVDALATQ…GWFEPLVEDM (81 aa)) is lipid-binding and lipoprotein association. 241 to 248 (GQQLRGRL) provides a ligand contact to heparin. The tract at residues 278–329 (NQMRQQAEPFQARLKGWFEPLVEDMQRQWAVLVEKVQAAVGTSPTTPPVETK) is homooligomerization. The segment at 290-302 (RLKGWFEPLVEDM) is specificity for association with VLDL.

This sequence belongs to the apolipoprotein A1/A4/E family. As to quaternary structure, homotetramer. May interact with ABCA1; functionally associated with ABCA1 in the biogenesis of HDLs. May interact with APP/A4 amyloid-beta peptide; the interaction is extremely stable in vitro but its physiological significance is unclear. May interact with MAPT. May interact with MAP2. In the cerebrospinal fluid, interacts with secreted SORL1. Interacts with PMEL; this allows the loading of PMEL luminal fragment on ILVs to induce fibril nucleation. In terms of processing, APOE exists as multiple glycosylated and sialylated glycoforms within cells and in plasma. The extent of glycosylation and sialylation are tissue and context specific. Glycated in plasma VLDL. Post-translationally, phosphorylated by FAM20C in the extracellular medium.

Its subcellular location is the secreted. The protein localises to the extracellular space. The protein resides in the extracellular matrix. It localises to the extracellular vesicle. It is found in the endosome. Its subcellular location is the multivesicular body. APOE is an apolipoprotein, a protein associating with lipid particles, that mainly functions in lipoprotein-mediated lipid transport between organs via the plasma and interstitial fluids. APOE is a core component of plasma lipoproteins and is involved in their production, conversion and clearance. Apolipoproteins are amphipathic molecules that interact both with lipids of the lipoprotein particle core and the aqueous environment of the plasma. As such, APOE associates with chylomicrons, chylomicron remnants, very low density lipoproteins (VLDL) and intermediate density lipoproteins (IDL) but shows a preferential binding to high-density lipoproteins (HDL). It also binds a wide range of cellular receptors including the LDL receptor/LDLR, the LDL receptor-related proteins LRP1, LRP2 and LRP8 and the very low-density lipoprotein receptor/VLDLR that mediate the cellular uptake of the APOE-containing lipoprotein particles. Finally, APOE also has a heparin-binding activity and binds heparan-sulfate proteoglycans on the surface of cells, a property that supports the capture and the receptor-mediated uptake of APOE-containing lipoproteins by cells. A main function of APOE is to mediate lipoprotein clearance through the uptake of chylomicrons, VLDLs, and HDLs by hepatocytes. APOE is also involved in the biosynthesis by the liver of VLDLs as well as their uptake by peripheral tissues ensuring the delivery of triglycerides and energy storage in muscle, heart and adipose tissues. By participating in the lipoprotein-mediated distribution of lipids among tissues, APOE plays a critical role in plasma and tissues lipid homeostasis. APOE is also involved in two steps of reverse cholesterol transport, the HDLs-mediated transport of cholesterol from peripheral tissues to the liver, and thereby plays an important role in cholesterol homeostasis. First, it is functionally associated with ABCA1 in the biogenesis of HDLs in tissues. Second, it is enriched in circulating HDLs and mediates their uptake by hepatocytes. APOE also plays an important role in lipid transport in the central nervous system, regulating neuron survival and sprouting. In Arctocephalus gazella (Antarctic fur seal), this protein is Apolipoprotein E (APOE).